A 767-amino-acid chain; its full sequence is RNA cytosine C(5)-methyltransferase NSUN2 (767 aa).

Positions 1 to 36 (MGRRSRGRRLQQQQRPEDAEDGAEGGGKRGEAGWEG) are disordered. Residue K46 forms a Glycyl lysine isopeptide (Lys-Gly) (interchain with G-Cter in SUMO2) linkage. S139 is subject to Phosphoserine; by AURKB. Residues 184–190 (CAAPGSK), D215, D242, and D268 each bind S-adenosyl-L-methionine. Residue C321 is the Nucleophile of the active site. A disordered region spans residues 436 to 481 (NKRQPKLQGKSAETRESTQLSPADLTEGKPTDPSKLESPSFTGTGD). At S456 the chain carries Phosphoserine. A compositionally biased stretch (basic and acidic residues) spans 461 to 470 (TEGKPTDPSK). Glycyl lysine isopeptide (Lys-Gly) (interchain with G-Cter in SUMO2) cross-links involve residues K464 and K470. Position 473 is a phosphoserine (S473). Residues K511 and K516 each participate in a glycyl lysine isopeptide (Lys-Gly) (interchain with G-Cter in SUMO2) cross-link. K586 is modified (N6-acetyllysine; alternate). K586 is modified (N6-malonyllysine; alternate). K586 participates in a covalent cross-link: Glycyl lysine isopeptide (Lys-Gly) (interchain with G-Cter in SUMO2); alternate. Phosphoserine is present on S593. Glycyl lysine isopeptide (Lys-Gly) (interchain with G-Cter in SUMO2) cross-links involve residues K640, K654, and K660. Position 718 is a phosphothreonine (T718). Positions 719-730 (NESAASTGQPDN) are enriched in polar residues. Positions 719–767 (NESAASTGQPDNDVTEGQRAGEPNSPDAEEANSPDVTAGCDPAGVHPPR) are disordered. Phosphoserine is present on residues S724, S743, and S751.

It belongs to the class I-like SAM-binding methyltransferase superfamily. RsmB/NOP family. TRM4 subfamily. As to quaternary structure, interacts with NPM1 and NCL during interphase; interaction is disrupted following phosphorylation at Ser-139. In terms of processing, phosphorylated at Ser-139 by AURKB during mitosis, leading to abolish methyltransferase activity and the interaction with NPM1. As to expression, expressed in adult and fetal brain and in lymphoblastoid cells.

The protein resides in the nucleus. The protein localises to the nucleolus. It is found in the cytoplasm. It localises to the mitochondrion. Its subcellular location is the cytoskeleton. The protein resides in the spindle. The protein localises to the secreted. It is found in the extracellular exosome. It catalyses the reaction cytidine(48) in tRNA + S-adenosyl-L-methionine = 5-methylcytidine(48) in tRNA + S-adenosyl-L-homocysteine + H(+). The catalysed reaction is cytidine(49) in tRNA + S-adenosyl-L-methionine = 5-methylcytidine(49) in tRNA + S-adenosyl-L-homocysteine + H(+). The enzyme catalyses cytidine(50) in tRNA + S-adenosyl-L-methionine = 5-methylcytidine(50) in tRNA + S-adenosyl-L-homocysteine + H(+). It carries out the reaction cytidine(34) in tRNA precursor + S-adenosyl-L-methionine = 5-methylcytidine(34) in tRNA precursor + S-adenosyl-L-homocysteine + H(+). It catalyses the reaction a cytidine in mRNA + S-adenosyl-L-methionine = a 5-methylcytidine in mRNA + S-adenosyl-L-homocysteine + H(+). With respect to regulation, inhibited by magnesium ions. Its function is as follows. RNA cytosine C(5)-methyltransferase that methylates cytosine to 5-methylcytosine (m5C) in various RNAs, such as tRNAs, mRNAs and some long non-coding RNAs (lncRNAs). Involved in various processes, such as epidermal stem cell differentiation, testis differentiation and maternal to zygotic transition during early development: acts by increasing protein synthesis; cytosine C(5)-methylation promoting tRNA stability and preventing mRNA decay. Methylates cytosine to 5-methylcytosine (m5C) at positions 34 and 48 of intron-containing tRNA(Leu)(CAA) precursors, and at positions 48, 49 and 50 of tRNA(Gly)(GCC) precursors. tRNA methylation is required generation of RNA fragments derived from tRNAs (tRFs). Also mediates C(5)-methylation of mitochondrial tRNAs. Catalyzes cytosine C(5)-methylation of mRNAs, leading to stabilize them and prevent mRNA decay: mRNA stabilization involves YBX1 that specifically recognizes and binds m5C-modified transcripts. Cytosine C(5)-methylation of mRNAs also regulates mRNA export: methylated transcripts are specifically recognized by THOC4/ALYREF, which mediates mRNA nucleo-cytoplasmic shuttling. Also mediates cytosine C(5)-methylation of non-coding RNAs, such as vault RNAs (vtRNAs), promoting their processing into regulatory small RNAs. Cytosine C(5)-methylation of vtRNA VTRNA1.1 promotes its processing into small-vault RNA4 (svRNA4) and regulates epidermal differentiation. May act downstream of Myc to regulate epidermal cell growth and proliferation. Required for proper spindle assembly and chromosome segregation, independently of its methyltransferase activity. The polypeptide is RNA cytosine C(5)-methyltransferase NSUN2 (Homo sapiens (Human)).